The following is a 229-amino-acid chain: HTH-type transcriptional regulator HbdR (229 aa).

Positions 20–80 (EERRHQIISA…LTLKNVLDTY (61 aa)) constitute an HTH tetR-type domain. The segment at residues 43-62 (TILQIAREAKVSTGLIYQYF) is a DNA-binding region (H-T-H motif).

In terms of assembly, homodimer in solution.

Its activity is regulated as follows. Activity is regulated by the effector molecules 3-hydroxybenzoyl-CoA and benzoyl-CoA, which bind to HbdR, alleviating its repression on the three target promoters and inducing the expression of the hbd genes. Transcriptional regulator that controls the expression of the hbd cluster, which contains three catabolic operons and is responsible for the anaerobic degradation of 3-hydroxybenzoate. HbdR suppresses the activity of the three catabolic promoters (PhbdN, PhbdE and PhbdH) by binding to a conserved palindromic operator box. In addition, it slightly increases activity of its own promoter (PhbdR). The HbdR-mediated repression of hbd genes may play a crucial biological role in maintaining requisite hydroxybenzoate levels in the cell. The protein is HTH-type transcriptional regulator HbdR of Aromatoleum sp. (strain CIB) (Azoarcus sp. (strain CIB)).